A 393-amino-acid polypeptide reads, in one-letter code: Reticulon-like protein 2 (393 aa).

A compositionally biased stretch (low complexity) spans 1–21 (MNRNTTTNKNANLNNSRNANA). A disordered region spans residues 1 to 25 (MNRNTTTNKNANLNNSRNANAPGEA). Over 1-60 (MNRNTTTNKNANLNNSRNANAPGEAGHQNKTGLIYWTNPSKSGASFAATLVSLLILRNVN) the chain is Cytoplasmic. The region spanning 30–236 (KTGLIYWTNP…SISNENKSST (207 aa)) is the Reticulon domain. Residues 61 to 81 (VISVLLKIGYMVLFTSFAVEL) traverse the membrane as a helical segment. Over 82-149 (STKVLFDKGV…IGVSLYFLHG (68 aa)) the chain is Lumenal. An N-linked (GlcNAc...) asparagine glycan is attached at Asn-137. Residues 150–170 (LFAIFSMNTVLIMTTIFLYTV) traverse the membrane as a helical segment. Topologically, residues 171-393 (PLIYDRKQAR…HGLKQKLQHA (223 aa)) are cytoplasmic. Disordered regions lie at residues 214 to 313 (IIPP…DVKT) and 339 to 393 (GDYN…LQHA). The segment covering 220–285 (DEGSYSTSIS…PVSQNENIGT (66 aa)) has biased composition (polar residues). Ser-278 bears the Phosphoserine mark. The segment covering 289 to 313 (GKQEIPTEKDFNNRHENFSKPDVKT) has biased composition (basic and acidic residues). Residues 365-376 (PAESQSIPIKNN) are compositionally biased toward polar residues. Positions 381–393 (KTTHGLKQKLQHA) are enriched in basic residues.

Its subcellular location is the endoplasmic reticulum membrane. This chain is Reticulon-like protein 2 (RTN2), found in Saccharomyces cerevisiae (strain ATCC 204508 / S288c) (Baker's yeast).